Here is a 180-residue protein sequence, read N- to C-terminus: MQNPQNLIWIDLEMTGLDPDRDVIIEMATIVTDSDLNTLAEGPVIAIHQPEEVLAGMDEWNTRQHGQSGLTQRVRESTVSMAEAEAQTLAFLEQWVPKRSSPICGNSICQDRRFLYRHMPRLEGYFHYRNLDVSTLKELAARWAPQVRESFKKGNTHLALDDIRESIAELRHYRDHFIKL.

An Exonuclease domain is found at 7-170 (LIWIDLEMTG…DDIRESIAEL (164 aa)). Y128 is an active-site residue.

This sequence belongs to the oligoribonuclease family.

It is found in the cytoplasm. In terms of biological role, 3'-to-5' exoribonuclease specific for small oligoribonucleotides. This Pseudomonas paraeruginosa (strain DSM 24068 / PA7) (Pseudomonas aeruginosa (strain PA7)) protein is Oligoribonuclease.